Reading from the N-terminus, the 882-residue chain is Translation initiation factor IF-2 (882 aa).

A disordered region spans residues 38–294; the sequence is IEDSQASWVK…KSKHKRKKEN (257 aa). Basic and acidic residues-rich tracts occupy residues 66 to 76, 109 to 128, and 207 to 219; these read TRDEAVKKHSG, GRREFSENREQSRKGEERHS, and PDNKGSRPSDAKR. Over residues 282-292 the composition is skewed to basic residues; the sequence is PGRKSKHKRKK. The tr-type G domain maps to 383–556; that stretch reads ARPPVVTIMG…EMNEIRANPD (174 aa). The G1 stretch occupies residues 392-399; the sequence is GHVDHGKT. Residue 392–399 coordinates GTP; sequence GHVDHGKT. The interval 417–421 is G2; that stretch reads GITQH. A G3 region spans residues 438 to 441; sequence DTPG. GTP-binding positions include 438 to 442 and 492 to 495; these read DTPGH and NKID. The interval 492–495 is G4; that stretch reads NKID. The tract at residues 528-530 is G5; it reads SAK.

The protein belongs to the TRAFAC class translation factor GTPase superfamily. Classic translation factor GTPase family. IF-2 subfamily.

Its subcellular location is the cytoplasm. One of the essential components for the initiation of protein synthesis. Protects formylmethionyl-tRNA from spontaneous hydrolysis and promotes its binding to the 30S ribosomal subunits. Also involved in the hydrolysis of GTP during the formation of the 70S ribosomal complex. The polypeptide is Translation initiation factor IF-2 (Syntrophomonas wolfei subsp. wolfei (strain DSM 2245B / Goettingen)).